The primary structure comprises 1966 residues: Dedicator of cytokinesis protein 4 (1966 aa).

Positions 6-67 constitute an SH3 domain; that stretch reads EHEKYGVVIA…PSSYVHLKNA (62 aa). Tyrosine 167 bears the Phosphotyrosine mark. Position 193 is a phosphothreonine (threonine 193). The region spanning 401-574 is the C2 DOCK-type domain; it reads RNDLYITIER…ESFCITSFLC (174 aa). The region spanning 1190-1596 is the DOCKER domain; sequence KTELNKEEMY…LGIQEFSACM (407 aa). A phosphoserine mark is found at serine 1599, serine 1607, serine 1614, serine 1618, serine 1620, and serine 1631. Disordered regions lie at residues 1648-1729 and 1742-1966; these read SQAS…IYPT and IGDG…VSQL. Over residues 1672–1703 the composition is skewed to low complexity; that stretch reads PSPSTSSLSSTHSASPNVTSSAPSSARASPLL. Serine 1769 carries the phosphoserine modification. The SH3-binding signature appears at 1788–1794; the sequence is PPVPPRP. Positions 1795-1809 are enriched in polar residues; that stretch reads TQTASPARHTTSVSP. Residues 1838–1863 show a composition bias toward low complexity; the sequence is SNSPVLSGSYSSGISSLSRCSTSETS. The segment covering 1864 to 1873 has biased composition (polar residues); sequence GFENQVNEQS. Basic and acidic residues predominate over residues 1941-1954; sequence SHLENGARRTDPGP.

The protein belongs to the DOCK family. Interacts with nucleotide-free Rap1; functions as a guanine nucleotide exchange factor (GEF) for Rap1. Interacts (via DOCKER domain) with RAC1; functions as a guanine nucleotide exchange factor (GEF) for RAC1. Interacts with the SH3 domain of CRK. Interacts with FASLG. Interacts with ELMO2 and EPHA2; mediates activation of RAC1 by EPHA2. Interacts with USH1C (via PDZ 1 domain). Widely expressed at low level. Highly expressed in skeletal muscle, prostate and ovary. As to expression, may be specifically expressed in the brain and eye.

It is found in the cell membrane. It localises to the cell projection. The protein localises to the cytoplasm. Its subcellular location is the cytosol. Functions as a guanine nucleotide exchange factor (GEF) that promotes the exchange of GDP to GTP, converting inactive GDP-bound small GTPases into their active GTP-bound form. Involved in regulation of adherens junction between cells. Plays a role in cell migration. Its function is as follows. Has a higher guanine nucleotide exchange factor activity compared to other isoforms. The chain is Dedicator of cytokinesis protein 4 (DOCK4) from Homo sapiens (Human).